A 124-amino-acid chain; its full sequence is UPF0231 protein Sputcn32_0682 (124 aa).

This sequence belongs to the UPF0231 family.

The protein is UPF0231 protein Sputcn32_0682 of Shewanella putrefaciens (strain CN-32 / ATCC BAA-453).